A 613-amino-acid polypeptide reads, in one-letter code: MGALRPTLLPPSLPLLLLLMLGMGCWAREVLVPEGPLYRVAGTAVSISCNVTGYEGPAQQNFEWFLYRPEAPDTALGIVSTKDTQFSYAVFKSRVVAGEVQVQRLQGDAVVLKIARLQAQDAGIYECHTPSTDTRYLGSYSGKVELRVLPDVLQVSAAPPGPRGRQAPTSPPRMTVHEGQELALGCLARTSTQKHTHLAVSFGRSVPEAPVGRSTLQEVVGIRSDLAVEAGAPYAERLAAGELRLGKEGTDRYRMVVGGAQAGDAGTYHCTAAEWIQDPDGSWAQIAEKRAVLAHVDVQTLSSQLAVTVGPGERRIGPGEPLELLCNVSGALPPAGRHAAYSVGWEMAPAGAPGPGRLVAQLDTEGVGSLGPGYEGRHIAMEKVASRTYRLRLEAARPGDAGTYRCLAKAYVRGSGTRLREAASARSRPLPVHVREEGVVLEAVAWLAGGTVYRGETASLLCNISVRGGPPGLRLAASWWVERPEDGELSSVPAQLVGGVGQDGVAELGVRPGGGPVSVELVGPRSHRLRLHSLGPEDEGVYHCAPSAWVQHADYSWYQAGSARSGPVTVYPYMHALDTLFVPLLVGTGVALVTGATVLGTITCCFMKRLRKR.

Positions 1 to 27 are cleaved as a signal peptide; the sequence is MGALRPTLLPPSLPLLLLLMLGMGCWA. 4 consecutive Ig-like C2-type domains span residues 28–149, 162–286, 303–424, and 431–560; these read REVL…LRVL, PRGR…WAQI, SQLA…EAAS, and PVHV…WYQA. Residues 28–579 lie on the Extracellular side of the membrane; the sequence is REVLVPEGPL…VYPYMHALDT (552 aa). Cysteines 49 and 127 form a disulfide. N-linked (GlcNAc...) asparagine glycosylation occurs at asparagine 50. Residues 155–174 are disordered; that stretch reads VSAAPPGPRGRQAPTSPPRM. Cysteines 186 and 270 form a disulfide. The EWI motif signature appears at 274-276; it reads EWI. 2 disulfide bridges follow: cysteine 326–cysteine 406 and cysteine 462–cysteine 544. 2 N-linked (GlcNAc...) asparagine glycosylation sites follow: asparagine 327 and asparagine 463. Residue serine 518 is modified to Phosphoserine. A helical transmembrane segment spans residues 580–600; sequence LFVPLLVGTGVALVTGATVLG. The Cytoplasmic segment spans residues 601–613; it reads TITCCFMKRLRKR. 2 S-palmitoyl cysteine lipidation sites follow: cysteine 604 and cysteine 605.

In terms of assembly, interacts directly with CD82, CD81/tetraspanin-28 and CD9/tetraspanin-29. Also interacts with integrin alpha-3/beta-1 and integrin alpha-4/beta-1. Interacts with HSPA8; this interaction modulates migratory and antigen-presenting capacities of dendritic cells. Expressed in brain, kidney, testis, liver and placenta with moderate expression in all other tissues. Detected on a majority of B-cells, T-cells, and natural killer cells. Expressed on dendritic cells.

It localises to the cell membrane. Functionally, member of the immunoglobulin superfamily (IgSF) that links tetraspanin-enriched microdomains to the actin cytoskeleton and plays several important roles in innate and adaptive immunity. Acts as an inducible receptor of HSPA8 on dendritic cells to enhance the CCL21/SLC-dependent migration of activated mature dendritic cells while attenuating their antigen-specific stimulatory capacities. In complex with alpha-actinins ACTN1 and ACTN4, regulates actin dynamics in the immune synapse and subsequent T-cell activation. Inhibits the entry of several viruses such as hepatitis C Virus (HCV) or HIV-1. Mechanistically, promotes a change in CD81 organization at the plasma membrane by significantly restricting its diffusion which in turn influences CD81 interaction with Claudin-1/CLDN1, preventing CLDN1 from acting as a co-receptor required for HCV entry. Accumulates at the presynaptic terminal, the producer cell side of the virological synapse, to prevent HIV-1 Env-mediated cell-cell fusion. Highly expressed on malignant cells with antigen presentation defects, interacts with NK receptor KIR3DL2 to suppress NK-cell cytotoxicity. May participate in the regulation of neurite outgrowth and maintenance of the neural network in the adult brain. This chain is Immunoglobulin superfamily member 8 (IGSF8), found in Homo sapiens (Human).